We begin with the raw amino-acid sequence, 116 residues long: Phosphoribosyl-AMP cyclohydrolase (116 aa).

D81 serves as a coordination point for Mg(2+). C82 is a Zn(2+) binding site. Mg(2+)-binding residues include D83 and D85. Positions 98 and 105 each coordinate Zn(2+).

Belongs to the PRA-CH family. As to quaternary structure, homodimer. Requires Mg(2+) as cofactor. Zn(2+) serves as cofactor.

It localises to the cytoplasm. The catalysed reaction is 1-(5-phospho-beta-D-ribosyl)-5'-AMP + H2O = 1-(5-phospho-beta-D-ribosyl)-5-[(5-phospho-beta-D-ribosylamino)methylideneamino]imidazole-4-carboxamide. It participates in amino-acid biosynthesis; L-histidine biosynthesis; L-histidine from 5-phospho-alpha-D-ribose 1-diphosphate: step 3/9. Functionally, catalyzes the hydrolysis of the adenine ring of phosphoribosyl-AMP. The polypeptide is Phosphoribosyl-AMP cyclohydrolase (Mycolicibacterium vanbaalenii (strain DSM 7251 / JCM 13017 / BCRC 16820 / KCTC 9966 / NRRL B-24157 / PYR-1) (Mycobacterium vanbaalenii)).